The sequence spans 463 residues: Glycine--tRNA ligase (463 aa).

Substrate is bound by residues R98 and E170. ATP contacts are provided by residues R202–E204, F212–F217, E287–L288, and G331–R334. Residue F217–E221 coordinates substrate. Residue E327 to G331 participates in substrate binding.

The protein belongs to the class-II aminoacyl-tRNA synthetase family. As to quaternary structure, homodimer.

It localises to the cytoplasm. It catalyses the reaction tRNA(Gly) + glycine + ATP = glycyl-tRNA(Gly) + AMP + diphosphate. Its function is as follows. Catalyzes the attachment of glycine to tRNA(Gly). This Mycoplasmoides gallisepticum (strain R(low / passage 15 / clone 2)) (Mycoplasma gallisepticum) protein is Glycine--tRNA ligase.